The primary structure comprises 386 residues: Large ribosomal subunit protein uL4 (386 aa).

Positions 341-357 (VEQRRLKEKQAKLDQKR) are enriched in basic and acidic residues. The segment at 341 to 386 (VEQRRLKEKQAKLDQKRGIATPVEGAGKGRPRKTTAKPTKAKAGKK) is disordered. Basic residues predominate over residues 369–386 (GRPRKTTAKPTKAKAGKK).

This sequence belongs to the universal ribosomal protein uL4 family.

The sequence is that of Large ribosomal subunit protein uL4 (RPL4) from Urechis caupo (Innkeeper worm).